The sequence spans 94 residues: Probable Fe(2+)-trafficking protein (94 aa).

Belongs to the Fe(2+)-trafficking protein family.

In terms of biological role, could be a mediator in iron transactions between iron acquisition and iron-requiring processes, such as synthesis and/or repair of Fe-S clusters in biosynthetic enzymes. This Haemophilus ducreyi (strain 35000HP / ATCC 700724) protein is Probable Fe(2+)-trafficking protein.